The chain runs to 206 residues: Large ribosomal subunit protein bL25 (206 aa).

The interval aspartate 168–lysine 206 is disordered. A compositionally biased stretch (low complexity) spans glutamate 184 to lysine 206.

The protein belongs to the bacterial ribosomal protein bL25 family. CTC subfamily. As to quaternary structure, part of the 50S ribosomal subunit; part of the 5S rRNA/L5/L18/L25 subcomplex. Contacts the 5S rRNA. Binds to the 5S rRNA independently of L5 and L18.

Functionally, this is one of the proteins that binds to the 5S RNA in the ribosome where it forms part of the central protuberance. The sequence is that of Large ribosomal subunit protein bL25 from Bifidobacterium longum (strain DJO10A).